A 590-amino-acid polypeptide reads, in one-letter code: PWWP domain-containing protein 2B (590 aa).

Disordered regions lie at residues 52–110 (APLP…PPLP), 182–347 (KSTL…EHEP), 360–398 (YLRD…PQGP), and 426–467 (DSLD…TVPP). Serine 84 bears the Phosphoserine mark. A compositionally biased stretch (pro residues) spans 99–110 (PEPPPPLVPPLP). Phosphoserine occurs at positions 186 and 206. A compositionally biased stretch (basic and acidic residues) spans 208–217 (PDRELRKPEE). Serine 250 is subject to Phosphoserine. Positions 296–305 (VLDRESRDRP) are enriched in basic and acidic residues. Residues 376–385 (GLADLSSGSS) show a composition bias toward low complexity. Position 447 is a phosphoserine (serine 447). The PWWP domain maps to 490–550 (VGDIVWGKIH…ISKLSPFSEF (61 aa)).

As to quaternary structure, component of a MTA1-specific subcomplex of the NuRD complex composed of PWWP2B, MTA1 and HDAC1 but does not contain CHD4 and MBD3. Interacts with MTA1 and HDAC1. Interacts with MTA2, MTA3, HDAC2, RBBP4, RBBP7, BRCC3 and ZNF516. Does not interact with CHD4 and MBD3. Post-translationally, deubiquitinated by BRCC3; leading to its stabilization.

Chromatin-binding protein that acts as an adapter between distinct nucleosome components (H3K36me3 or H2A.Z) and chromatin-modifying complexes, contributing to the regulation of the levels of histone acetylation at actively transcribed genes. Competes with CHD4 and MBD3 for interaction with MTA1 to form a NuRD subcomplex, preventing the formation of full NuRD complex (containing CHD4 and MBD3), leading to recruitment of HDACs to gene promoters resulting in turn in the deacetylation of nearby H3K27 and H2A.Z. Plays a role in facilitating transcriptional elongation through regulation of histone acetylation. Negatively regulates brown adipocyte thermogenesis by interacting with and stabilizing HDAC1 at the UCP1 gene promoter, thereby promoting histone deacetylation at the promoter leading to the repression of UCP1 expression. In Homo sapiens (Human), this protein is PWWP domain-containing protein 2B (PWWP2B).